Here is a 363-residue protein sequence, read N- to C-terminus: Cytoskeleton protein RodZ (363 aa).

At 1-111 (MNTEASQDQT…LGKKHKKRDG (111 aa)) the chain is on the cytoplasmic side. The HTH cro/C1-type domain maps to 19–79 (LRQARESLGL…KLVHLPEDEL (61 aa)). Positions 30–49 (QQTVAERLCLKVSTIRDIEE) form a DNA-binding region, H-T-H motif. The helical; Signal-anchor for type II membrane protein transmembrane segment at 112 to 132 (WLMSFTWLIVLVVLGLTGAWW) threads the bilayer. At 133–363 (WQNHQAQQAE…RVARLTVGVE (231 aa)) the chain is on the periplasmic side. Positions 151–277 (SAQLSQNGGQ…PLPTADAGVS (127 aa)) are disordered. Residues 188 to 199 (PLTNHSVSAITN) are compositionally biased toward polar residues. A compositionally biased stretch (low complexity) spans 200–225 (SAPTTSSVPTTSSATTSSVPTTSSVP). The span at 226-243 (KINSTEPVDTANTNTTMH) shows a compositional bias: polar residues. Residues 247 to 259 (AASAAVSPSQVPQ) show a composition bias toward low complexity.

The protein belongs to the RodZ family.

The protein localises to the cell inner membrane. Cytoskeletal protein that is involved in cell-shape control through regulation of the length of the long axis. The sequence is that of Cytoskeleton protein RodZ from Yersinia pseudotuberculosis serotype O:1b (strain IP 31758).